A 332-amino-acid polypeptide reads, in one-letter code: Holliday junction branch migration complex subunit RuvB (332 aa).

The segment at 1 to 181 is large ATPase domain (RuvB-L); it reads MSRILDNEIM…FGITGHMEYY (181 aa). ATP is bound by residues L20, R21, G62, K65, T66, T67, 128–130, R171, Y181, and R218; that span reads EDF. T66 is a binding site for Mg(2+). Residues 182 to 252 are small ATPAse domain (RuvB-S); sequence AHAGLTEIVE…ITDKALTMLD (71 aa). The segment at 255 to 332 is head domain (RuvB-H); it reads HEGLDYVDQK…EHLGYEYSEK (78 aa). DNA contacts are provided by R291, R310, R312, and R315.

Belongs to the RuvB family. In terms of assembly, homohexamer. Forms an RuvA(8)-RuvB(12)-Holliday junction (HJ) complex. HJ DNA is sandwiched between 2 RuvA tetramers; dsDNA enters through RuvA and exits via RuvB. An RuvB hexamer assembles on each DNA strand where it exits the tetramer. Each RuvB hexamer is contacted by two RuvA subunits (via domain III) on 2 adjacent RuvB subunits; this complex drives branch migration. In the full resolvosome a probable DNA-RuvA(4)-RuvB(12)-RuvC(2) complex forms which resolves the HJ.

The protein resides in the cytoplasm. The catalysed reaction is ATP + H2O = ADP + phosphate + H(+). In terms of biological role, the RuvA-RuvB-RuvC complex processes Holliday junction (HJ) DNA during genetic recombination and DNA repair, while the RuvA-RuvB complex plays an important role in the rescue of blocked DNA replication forks via replication fork reversal (RFR). RuvA specifically binds to HJ cruciform DNA, conferring on it an open structure. The RuvB hexamer acts as an ATP-dependent pump, pulling dsDNA into and through the RuvAB complex. RuvB forms 2 homohexamers on either side of HJ DNA bound by 1 or 2 RuvA tetramers; 4 subunits per hexamer contact DNA at a time. Coordinated motions by a converter formed by DNA-disengaged RuvB subunits stimulates ATP hydrolysis and nucleotide exchange. Immobilization of the converter enables RuvB to convert the ATP-contained energy into a lever motion, pulling 2 nucleotides of DNA out of the RuvA tetramer per ATP hydrolyzed, thus driving DNA branch migration. The RuvB motors rotate together with the DNA substrate, which together with the progressing nucleotide cycle form the mechanistic basis for DNA recombination by continuous HJ branch migration. Branch migration allows RuvC to scan DNA until it finds its consensus sequence, where it cleaves and resolves cruciform DNA. The chain is Holliday junction branch migration complex subunit RuvB from Streptococcus pneumoniae (strain JJA).